We begin with the raw amino-acid sequence, 215 residues long: Nascent polypeptide-associated complex subunit alpha (215 aa).

Residues 1–81 (MPGEATETVP…SEKKARKAMS (81 aa)) form a disordered region. Over residues 9-21 (VPVTEQEMQQPQV) the composition is skewed to polar residues. The span at 29 to 42 (SDSDDSVPELEEQD) shows a compositional bias: acidic residues. The segment covering 43–57 (SAQTQTQQAQLAAAA) has biased composition (low complexity). Positions 70-135 (SRSEKKARKA…AKIEDLSQQA (66 aa)) constitute an NAC-A/B domain. The 38-residue stretch at 176–213 (VEVKDIELVMSQANVSRAKAVRALKNNNNDIVNAIMEL) folds into the UBA domain.

It belongs to the NAC-alpha family.

May promote appropriate targeting of ribosome-nascent polypeptide complexes. This is Nascent polypeptide-associated complex subunit alpha (naca) from Oreochromis niloticus (Nile tilapia).